The chain runs to 138 residues: Photosystem II extrinsic protein U (138 aa).

An N-terminal signal peptide occupies residues 1–28 (MSRVVSALMGLVLMFGCAFFSVQPQAQA). The propeptide occupies 29–42 (LDLSNGFVSAAVLG).

This sequence belongs to the PsbU family. PSII is composed of 1 copy each of membrane proteins PsbA, PsbB, PsbC, PsbD, PsbE, PsbF, PsbH, PsbI, PsbJ, PsbK, PsbL, PsbM, PsbT, PsbX, PsbY, PsbZ, Psb30/Ycf12, peripheral proteins PsbO, CyanoQ (PsbQ), PsbU, PsbV and a large number of cofactors. It forms dimeric complexes.

The protein resides in the cellular thylakoid membrane. Its function is as follows. One of the extrinsic, lumenal subunits of photosystem II (PSII). PSII is a light-driven water plastoquinone oxidoreductase, using light energy to abstract electrons from H(2)O, generating a proton gradient subsequently used for ATP formation. The extrinsic proteins stabilize the structure of photosystem II oxygen-evolving complex (OEC), the ion environment of oxygen evolution and protect the OEC against heat-induced inactivation. The polypeptide is Photosystem II extrinsic protein U (Picosynechococcus sp. (strain ATCC 27264 / PCC 7002 / PR-6) (Agmenellum quadruplicatum)).